Consider the following 855-residue polypeptide: DNA mismatch repair protein MutS (855 aa).

ATP is bound at residue 615-622 (GPNMGGKS).

It belongs to the DNA mismatch repair MutS family.

Its function is as follows. This protein is involved in the repair of mismatches in DNA. It is possible that it carries out the mismatch recognition step. This protein has a weak ATPase activity. This is DNA mismatch repair protein MutS from Aliivibrio salmonicida (strain LFI1238) (Vibrio salmonicida (strain LFI1238)).